The sequence spans 363 residues: S-adenosylmethionine:tRNA ribosyltransferase-isomerase (363 aa).

Belongs to the QueA family. Monomer.

It localises to the cytoplasm. It catalyses the reaction 7-aminomethyl-7-carbaguanosine(34) in tRNA + S-adenosyl-L-methionine = epoxyqueuosine(34) in tRNA + adenine + L-methionine + 2 H(+). Its pathway is tRNA modification; tRNA-queuosine biosynthesis. Functionally, transfers and isomerizes the ribose moiety from AdoMet to the 7-aminomethyl group of 7-deazaguanine (preQ1-tRNA) to give epoxyqueuosine (oQ-tRNA). The protein is S-adenosylmethionine:tRNA ribosyltransferase-isomerase of Haemophilus influenzae (strain ATCC 51907 / DSM 11121 / KW20 / Rd).